We begin with the raw amino-acid sequence, 709 residues long: Pentatricopeptide repeat-containing protein At5g42310, chloroplastic (709 aa).

A chloroplast-targeting transit peptide spans 1 to 54 (MLLLQQPPLVSTRFHSLYFLTHHHHHHHRFFQPPISAFSATTSASLPSPSPSSS). 14 PPR repeats span residues 196-230 (TPLT…GYQS), 231-267 (DFVN…KLEL), 268-302 (DVQL…GLSA), 303-337 (KTAT…GIKP), 338-372 (RTRA…GVSP), 373-407 (DEHT…DVQP), 408-442 (NSFV…GVKP), 443-477 (DRQF…GIEP), 478-512 (DRVT…GCLP), 513-547 (CATT…GILP), 548-582 (NVVT…GLKP), 583-617 (SSTM…GLKP), 618-652 (SLLA…GVKP), and 653-687 (DVVT…GCKP).

The protein belongs to the PPR family. P subfamily. In terms of assembly, interacts with PDE338.

Its subcellular location is the plastid. It localises to the chloroplast stroma. The protein localises to the chloroplast thylakoid. The protein resides in the chloroplast. In terms of biological role, required for chloroplast protein synthesis and accumulation of subunits of the thylakoid protein complexes. Activates psaC and petA translation by binding their 5'-UTRs. Required for the correct processing of petB and petD mRNAs. Interacts with the petB and petD intergenic region and is required for the generation of petB and petD monocistronic RNAs. This is Pentatricopeptide repeat-containing protein At5g42310, chloroplastic from Arabidopsis thaliana (Mouse-ear cress).